The sequence spans 361 residues: Mannose-1-phosphate guanyltransferase (361 aa).

At threonine 153 the chain carries Phosphothreonine. Residue lysine 244 forms a Glycyl lysine isopeptide (Lys-Gly) (interchain with G-Cter in ubiquitin) linkage.

The protein belongs to the transferase hexapeptide repeat family.

The protein resides in the cytoplasm. The enzyme catalyses alpha-D-mannose 1-phosphate + GTP + H(+) = GDP-alpha-D-mannose + diphosphate. It functions in the pathway nucleotide-sugar biosynthesis; GDP-alpha-D-mannose biosynthesis; GDP-alpha-D-mannose from alpha-D-mannose 1-phosphate (GTP route): step 1/1. Functionally, involved in cell wall synthesis where it is required for glycosylation. Involved in cell cycle progression through cell-size checkpoint. The chain is Mannose-1-phosphate guanyltransferase (PSA1) from Saccharomyces cerevisiae (strain ATCC 204508 / S288c) (Baker's yeast).